A 408-amino-acid chain; its full sequence is Tryptophan synthase beta chain (408 aa).

Residue Lys103 is modified to N6-(pyridoxal phosphate)lysine.

The protein belongs to the TrpB family. In terms of assembly, tetramer of two alpha and two beta chains. Requires pyridoxal 5'-phosphate as cofactor.

The enzyme catalyses (1S,2R)-1-C-(indol-3-yl)glycerol 3-phosphate + L-serine = D-glyceraldehyde 3-phosphate + L-tryptophan + H2O. The protein operates within amino-acid biosynthesis; L-tryptophan biosynthesis; L-tryptophan from chorismate: step 5/5. The beta subunit is responsible for the synthesis of L-tryptophan from indole and L-serine. This Koribacter versatilis (strain Ellin345) protein is Tryptophan synthase beta chain.